The primary structure comprises 180 residues: ADP-ribosylation factor 4 (180 aa).

Residue G2 is the site of N-myristoyl glycine attachment. GTP is bound by residues 24–31 (GLDAAGKT), 67–71 (DVGGQ), and 126–129 (NKQD). At S147 the chain carries Phosphoserine.

The protein belongs to the small GTPase superfamily. Arf family. In terms of assembly, forms a complex containing RAB11A, ASAP1, RAB3IP, RAP11FIP3 and ARF4; the complex promotes preciliary trafficking; the complex binds to RHO in photoreceptor cells and promotes RHO ciliary transport.

The protein localises to the golgi apparatus. Its subcellular location is the membrane. Functionally, GTP-binding protein that functions as an allosteric activator of the cholera toxin catalytic subunit, an ADP-ribosyltransferase. Involved in protein trafficking; may modulate vesicle budding and uncoating within the Golgi apparatus. Part of the ciliary targeting complex containing Rab11, ASAP1, Rabin8/RAB3IP, RAB11FIP3 and ARF4, which direct preciliary vesicle trafficking to mother centriole and ciliogenesis initiation. The polypeptide is ADP-ribosylation factor 4 (Arf4) (Mus musculus (Mouse)).